We begin with the raw amino-acid sequence, 198 residues long: Guanine nucleotide-binding protein subunit alpha-11 (198 aa).

Positions 1 to 11 are G1 motif; it reads LLGTGESGKST. Residues 1–198 enclose the G-alpha domain; it reads LLGTGESGKS…LSEYDHVLVE (198 aa). GTP is bound by residues 3–10 and 137–140; these read GTGESGKS and LRVR. Residue Ser10 participates in Mg(2+) binding. The segment at 135 to 143 is G2 motif; sequence DVLRVRVPT. Thr143 serves as a coordination point for Mg(2+). Residues 158–167 are G3 motif; the sequence is FRMVDVGGQR.

It belongs to the G-alpha family. G(q) subfamily. G proteins are composed of 3 units; alpha, beta and gamma. The alpha chain contains the guanine nucleotide binding site. Interacts with RGS22. Interacts with NTSR1.

It localises to the cell membrane. It is found in the cytoplasm. It catalyses the reaction GTP + H2O = GDP + phosphate + H(+). In terms of biological role, guanine nucleotide-binding proteins (G proteins) function as transducers downstream of G protein-coupled receptors (GPCRs) in numerous signaling cascades. The alpha chain contains the guanine nucleotide binding site and alternates between an active, GTP-bound state and an inactive, GDP-bound state. Signaling by an activated GPCR promotes GDP release and GTP binding. The alpha subunit has a low GTPase activity that converts bound GTP to GDP, thereby terminating the signal. Both GDP release and GTP hydrolysis are modulated by numerous regulatory proteins. Signaling is mediated via phospholipase C-beta-dependent inositol lipid hydrolysis for signal propagation: activates phospholipase C-beta: following GPCR activation, GNA11 activates PLC-beta (PLCB1, PLCB2, PLCB3 or PLCB4), leading to production of diacylglycerol (DAG) and inositol 1,4,5-trisphosphate (IP3). Transduces FFAR4 signaling in response to long-chain fatty acids (LCFAs). Together with GNAQ, required for heart development. In the respiratory epithelium, transmits OXGR1-dependent signals that lead to downstream intracellular Ca(2+) release and mucocilliary clearance of airborne pathogens. This Canis lupus familiaris (Dog) protein is Guanine nucleotide-binding protein subunit alpha-11 (GNA11).